Reading from the N-terminus, the 449-residue chain is Glucose-6-phosphate isomerase 1 (449 aa).

Thr38 carries the post-translational modification Phosphothreonine. The Proton donor role is filled by Glu290. Residues His311 and Lys425 contribute to the active site.

It belongs to the GPI family. As to quaternary structure, homodimer.

The protein localises to the cytoplasm. The catalysed reaction is alpha-D-glucose 6-phosphate = beta-D-fructose 6-phosphate. Its pathway is carbohydrate biosynthesis; gluconeogenesis. The protein operates within carbohydrate degradation; glycolysis; D-glyceraldehyde 3-phosphate and glycerone phosphate from D-glucose: step 2/4. Catalyzes the reversible isomerization of glucose-6-phosphate to fructose-6-phosphate. The polypeptide is Glucose-6-phosphate isomerase 1 (Geobacillus stearothermophilus (Bacillus stearothermophilus)).